Reading from the N-terminus, the 274-residue chain is 2,3,4,5-tetrahydropyridine-2,6-dicarboxylate N-succinyltransferase (274 aa).

Positions 103 and 140 each coordinate substrate.

It belongs to the transferase hexapeptide repeat family. As to quaternary structure, homotrimer.

The protein localises to the cytoplasm. It carries out the reaction (S)-2,3,4,5-tetrahydrodipicolinate + succinyl-CoA + H2O = (S)-2-succinylamino-6-oxoheptanedioate + CoA. It functions in the pathway amino-acid biosynthesis; L-lysine biosynthesis via DAP pathway; LL-2,6-diaminopimelate from (S)-tetrahydrodipicolinate (succinylase route): step 1/3. The protein is 2,3,4,5-tetrahydropyridine-2,6-dicarboxylate N-succinyltransferase of Pasteurella multocida (strain Pm70).